Here is a 56-residue protein sequence, read N- to C-terminus: Small ribosomal subunit protein uS14 (56 aa).

This sequence belongs to the universal ribosomal protein uS14 family.

This Kluyveromyces lactis (strain ATCC 8585 / CBS 2359 / DSM 70799 / NBRC 1267 / NRRL Y-1140 / WM37) (Yeast) protein is Small ribosomal subunit protein uS14 (RPS29).